A 729-amino-acid polypeptide reads, in one-letter code: Cullin-6 (729 aa).

The Cullin neddylation domain occupies 659–720 (DRKYEIKACI…EQLYIRRSEN (62 aa)). Residue lysine 673 forms a Glycyl lysine isopeptide (Lys-Gly) (interchain with G-Cter in NEDD8) linkage.

It belongs to the cullin family. As to quaternary structure, probably interacts with skr-3. Neddylated; which enhances the ubiquitination activity of SCF-like complex.

In terms of biological role, probable core component of cullin-based SCF-like E3 ubiquitin-protein ligase complexes which mediate the ubiquitination and subsequent proteasomal degradation of target proteins. In Caenorhabditis elegans, this protein is Cullin-6 (cul-6).